We begin with the raw amino-acid sequence, 407 residues long: S-adenosylmethionine synthase (407 aa).

G140–D145 is an ATP binding site.

Belongs to the AdoMet synthase 2 family. The cofactor is Mg(2+).

The enzyme catalyses L-methionine + ATP + H2O = S-adenosyl-L-methionine + phosphate + diphosphate. It functions in the pathway amino-acid biosynthesis; S-adenosyl-L-methionine biosynthesis; S-adenosyl-L-methionine from L-methionine: step 1/1. Functionally, catalyzes the formation of S-adenosylmethionine from methionine and ATP. In Methanosphaera stadtmanae (strain ATCC 43021 / DSM 3091 / JCM 11832 / MCB-3), this protein is S-adenosylmethionine synthase.